Reading from the N-terminus, the 139-residue chain is ATP synthase epsilon chain (139 aa).

The protein belongs to the ATPase epsilon chain family. As to quaternary structure, F-type ATPases have 2 components, CF(1) - the catalytic core - and CF(0) - the membrane proton channel. CF(1) has five subunits: alpha(3), beta(3), gamma(1), delta(1), epsilon(1). CF(0) has three main subunits: a, b and c.

It is found in the cell membrane. Functionally, produces ATP from ADP in the presence of a proton gradient across the membrane. The polypeptide is ATP synthase epsilon chain (Streptococcus sanguinis).